The chain runs to 224 residues: Glutathione peroxidase 3 (224 aa).

A signal peptide spans 1-18; it reads MAPGSVLSLAVALATIIG. N-linked (GlcNAc...) asparagine glycosylation occurs at N38. C73 is a catalytic residue.

Belongs to the glutathione peroxidase family.

The protein localises to the secreted. It localises to the extracellular space. It carries out the reaction 2 glutathione + H2O2 = glutathione disulfide + 2 H2O. This chain is Glutathione peroxidase 3 (gpx-3), found in Caenorhabditis elegans.